A 356-amino-acid chain; its full sequence is Acyl-coenzyme A diphosphatase NUDT19 (356 aa).

Residues 10 to 241 (AATVMLAAGW…IWLAPPQFYE (232 aa)) enclose the Nudix hydrolase domain. Residues 72–94 (PRFGLGPEPPRQPPFPGLSHGDA) form a disordered region. Over residues 78–87 (PEPPRQPPFP) the composition is skewed to pro residues. A Nudix box motif is present at residues 97–118 (AALPDDVALRICAIRETFEEAG). The Mg(2+) site is built by E112 and E116. An N6-succinyllysine modification is found at K299. A Microbody targeting signal motif is present at residues 354 to 356 (ARL).

This sequence belongs to the Nudix hydrolase family. Monomer. Mg(2+) serves as cofactor. Requires Mn(2+) as cofactor.

It is found in the peroxisome. The catalysed reaction is an acyl-CoA + H2O = an acyl-4'-phosphopantetheine + adenosine 3',5'-bisphosphate + 2 H(+). The enzyme catalyses CoA + H2O = (R)-4'-phosphopantetheine + adenosine 3',5'-bisphosphate + 2 H(+). It catalyses the reaction hexanoyl-CoA + H2O = hexanoyl-4'-phosphopantetheine + adenosine 3',5'-bisphosphate + 2 H(+). It carries out the reaction octanoyl-CoA + H2O = S-octanoyl-4'-phosphopantetheine + adenosine 3',5'-bisphosphate + 2 H(+). The catalysed reaction is butanoyl-CoA + H2O = S-butanoyl-4'-phosphopantetheine + adenosine 3',5'-bisphosphate + 2 H(+). The enzyme catalyses propanoyl-CoA + H2O = propanoyl-4'-phosphopantetheine + adenosine 3',5'-bisphosphate + 2 H(+). It catalyses the reaction malonyl-CoA + H2O = malonyl-4'-phosphopantetheine + adenosine 3',5'-bisphosphate + 2 H(+). It carries out the reaction succinyl-CoA + H2O = succinyl-4'-phosphopantetheine + adenosine 3',5'-bisphosphate + 2 H(+). The catalysed reaction is choloyl-CoA + H2O = S-choloyl-4'-phosphopantetheine + adenosine 3',5'-bisphosphate + 2 H(+). The enzyme catalyses 4,8-dimethylnonanoyl-CoA + H2O = S-(4,8-dimethylnonanoyl)-4'-phosphopantetheine + adenosine 3',5'-bisphosphate + 2 H(+). It catalyses the reaction (9Z,12Z,15Z)-octadecatrienoyl-CoA + H2O = S-(9Z,12Z,15Z-octadecatrienoyl)-4'-phosphopantetheine + adenosine 3',5'-bisphosphate + 2 H(+). It carries out the reaction (9Z,12Z)-octadecadienoyl-CoA + H2O = S-(9Z,12Z-octadecadienoyl)-4'-phosphopantetheine + adenosine 3',5'-bisphosphate + 2 H(+). The catalysed reaction is (9Z)-hexadecenoyl-CoA + H2O = S-(9Z-hexadecenoyl)-4'-phosphopantetheine + adenosine 3',5'-bisphosphate + 2 H(+). The enzyme catalyses (9Z)-tetradecenoyl-CoA + H2O = S-(9Z-tetradecenoyl)-4'-phosphopantetheine + adenosine 3',5'-bisphosphate + 2 H(+). It catalyses the reaction (6Z)-octenoyl-CoA + H2O = S-(6Z-octenoyl)-4'-phosphopantetheine + adenosine 3',5'-bisphosphate + 2 H(+). It carries out the reaction hexadecanoyl-CoA + H2O = S-hexadecanoyl-4'-phosphopantetheine + adenosine 3',5'-bisphosphate + 2 H(+). The catalysed reaction is tetradecanoyl-CoA + H2O = tetradecanoyl-4'-phosphopantetheine + adenosine 3',5'-bisphosphate + 2 H(+). The enzyme catalyses dodecanoyl-CoA + H2O = S-dodecanoyl-4'-phosphopantetheine + adenosine 3',5'-bisphosphate + 2 H(+). It catalyses the reaction a 5'-end CoA-ribonucleoside in mRNA + H2O = a 5'-end phospho-adenosine-phospho-ribonucleoside in mRNA + (R)-4'-phosphopantetheine + 2 H(+). In terms of biological role, fatty acyl-coenzyme A (CoA) diphosphatase that hydrolyzes fatty acyl-CoA to yield acyl-4'-phosphopantetheine and adenosine 3',5'-bisphosphate. Mediates the hydrolysis of a wide range of CoA esters, including choloyl-CoA and branched-chain fatty-acyl-CoA esters and at low substrate concentrations medium and long-chain fatty-acyl-CoA esters are the primary substrates. Highest activity seen with medium-chain acyl-CoA esters and higher rates of activity seen with the unsaturated acyl-CoA esters compared with the saturated esters. Exhibits decapping activity towards dpCoA-capped RNAs in vitro. This Mus saxicola (Brown spiny mouse) protein is Acyl-coenzyme A diphosphatase NUDT19 (Nudt19).